Reading from the N-terminus, the 247-residue chain is MHLLALHLLLFLLGSRAKAGEIIGGTECKPHSRPYMAYLEIATSKNYLSTCSGFLIRRNFVLTAAHCSGRSITVLLGAHNKTAKEDTWQKIEVEKQFPHPKYDDYSVLHDIMLLKLKEKAKLTLAVGTLPLPAKFSFIPPGRVCRAVGWGKTNVNEPTSDTLQEVKMRLLEAEGCKHFTNFYHSSQLCVGNPKKMQNVYKGDSGGPLLCAGIAQGIASYVRRNARPPAVFTRISHYRPWINKILREN.

A signal peptide spans 1-19 (MHLLALHLLLFLLGSRAKA). A propeptide spans 20-21 (GE) (activation peptide). In terms of domain architecture, Peptidase S1 spans 22-245 (IIGGTECKPH…YRPWINKILR (224 aa)). C51 and C67 are joined by a disulfide. Residue H66 is the Charge relay system of the active site. N-linked (GlcNAc...) asparagine glycosylation occurs at N80. The Charge relay system role is filled by D110. 2 disulfides stabilise this stretch: C144/C209 and C175/C188. S203 acts as the Charge relay system in catalysis.

Belongs to the peptidase S1 family. Granzyme subfamily.

The polypeptide is Mast cell protease 2 (Meriones unguiculatus (Mongolian jird)).